The primary structure comprises 252 residues: Isoprenyl transferase (252 aa).

Residue D32 is part of the active site. D32 is a Mg(2+) binding site. Residues G33 to R36, W37, R45, H49, and S77 to E79 contribute to the substrate site. N80 acts as the Proton acceptor in catalysis. Substrate is bound by residues W81, R83, R200, and R206–S208. Mg(2+) is bound at residue E219.

It belongs to the UPP synthase family. In terms of assembly, homodimer. It depends on Mg(2+) as a cofactor.

Functionally, catalyzes the condensation of isopentenyl diphosphate (IPP) with allylic pyrophosphates generating different type of terpenoids. The protein is Isoprenyl transferase of Oceanobacillus iheyensis (strain DSM 14371 / CIP 107618 / JCM 11309 / KCTC 3954 / HTE831).